The primary structure comprises 288 residues: Energy-coupling factor transporter ATP-binding protein EcfA2 (288 aa).

The region spanning 3-246 is the ABC transporter domain; sequence IKLEQLGYCY…PDELVDLGLS (244 aa). ATP is bound at residue 40–47; it reads GHTGSGKS.

The protein belongs to the ABC transporter superfamily. Energy-coupling factor EcfA family. In terms of assembly, forms a stable energy-coupling factor (ECF) transporter complex composed of 2 membrane-embedded substrate-binding proteins (S component), 2 ATP-binding proteins (A component) and 2 transmembrane proteins (T component).

It localises to the cell membrane. In terms of biological role, ATP-binding (A) component of a common energy-coupling factor (ECF) ABC-transporter complex. Unlike classic ABC transporters this ECF transporter provides the energy necessary to transport a number of different substrates. This chain is Energy-coupling factor transporter ATP-binding protein EcfA2, found in Listeria monocytogenes serovar 1/2a (strain ATCC BAA-679 / EGD-e).